Here is a 411-residue protein sequence, read N- to C-terminus: Serine--tRNA ligase (411 aa).

226–228 serves as a coordination point for L-serine; that stretch reads TSE. 257 to 259 serves as a coordination point for ATP; it reads RKE. Glu-280 contacts L-serine. Residue 344–347 coordinates ATP; it reads EISS. Ser-379 lines the L-serine pocket.

It belongs to the class-II aminoacyl-tRNA synthetase family. Type-1 seryl-tRNA synthetase subfamily. As to quaternary structure, homodimer. The tRNA molecule binds across the dimer.

Its subcellular location is the cytoplasm. The catalysed reaction is tRNA(Ser) + L-serine + ATP = L-seryl-tRNA(Ser) + AMP + diphosphate + H(+). It carries out the reaction tRNA(Sec) + L-serine + ATP = L-seryl-tRNA(Sec) + AMP + diphosphate + H(+). Its pathway is aminoacyl-tRNA biosynthesis; selenocysteinyl-tRNA(Sec) biosynthesis; L-seryl-tRNA(Sec) from L-serine and tRNA(Sec): step 1/1. Its function is as follows. Catalyzes the attachment of serine to tRNA(Ser). Is also able to aminoacylate tRNA(Sec) with serine, to form the misacylated tRNA L-seryl-tRNA(Sec), which will be further converted into selenocysteinyl-tRNA(Sec). The chain is Serine--tRNA ligase from Campylobacter jejuni (strain RM1221).